A 601-amino-acid chain; its full sequence is Elongation factor 4 (601 aa).

Residues 7 to 189 (DTIRNFSIVA…AIVAKLPPPK (183 aa)) form the tr-type G domain. GTP-binding positions include 19–24 (DHGKST) and 136–139 (NKID).

The protein belongs to the TRAFAC class translation factor GTPase superfamily. Classic translation factor GTPase family. LepA subfamily.

It is found in the cell inner membrane. The enzyme catalyses GTP + H2O = GDP + phosphate + H(+). Required for accurate and efficient protein synthesis under certain stress conditions. May act as a fidelity factor of the translation reaction, by catalyzing a one-codon backward translocation of tRNAs on improperly translocated ribosomes. Back-translocation proceeds from a post-translocation (POST) complex to a pre-translocation (PRE) complex, thus giving elongation factor G a second chance to translocate the tRNAs correctly. Binds to ribosomes in a GTP-dependent manner. The chain is Elongation factor 4 from Methylobacterium nodulans (strain LMG 21967 / CNCM I-2342 / ORS 2060).